The sequence spans 336 residues: MNREMLYLNRSDIEQAGGNHSQVYVDALTEALTAHAHNDFVQPLKPYLRQDPENGHIADRIIAMPSHIGGEHAISGIKWIGSKHDNPSKRNMERASGVIILNDPETNYPIAVMEASLISSMRTAAVSVIAAKHLAKKGFKDLTIIGCGLIGDKQLQSMLEQFDHIERVFVYDQFSEACARFVDRWQQQRPEINFIATENAKEAVSNGEVVITCTVTDQPYIEYDWLQKGAFISNISIMDVHKEVFIKADKVVVDDWSQCNREKKTINQLVLEGKFSKEALHAELGQLVTGDIPGREDDDEIILLNPMGMAIEDISSAYFIYQQAQQQNIGTTLNLY.

The active-site Proton donor/acceptor is Lys-78. Residues Arg-122 and Lys-242 each coordinate NAD(+).

Belongs to the ornithine cyclodeaminase/mu-crystallin family. In terms of assembly, homodimer.

The enzyme catalyses N-[(2S)-2-amino-2-carboxyethyl]-L-glutamate + NAD(+) + H2O = (S)-2,3-diaminopropanoate + 2-oxoglutarate + NADH + H(+). It functions in the pathway siderophore biosynthesis. In terms of biological role, catalyzes the hydrolysis of N-((2S)-2-amino-2-carboxyethyl)-L-glutamate (ACEGA) to form L-2,3-diaminopropionic acid and 2-oxoglutarate. Involved in the biosynthesis of L-2,3-diaminopropionic acid (L-Dap), a precursor of staphyloferrin B and antibiotics. This chain is N-((2S)-2-amino-2-carboxyethyl)-L-glutamate dehydrogenase, found in Staphylococcus aureus (strain NCTC 8325 / PS 47).